Here is a 261-residue protein sequence, read N- to C-terminus: Pimeloyl-[acyl-carrier protein] methyl ester esterase (261 aa).

Positions 15–243 constitute an AB hydrolase-1 domain; that stretch reads HLVLLHGWGL…AAHAPFISHP (229 aa). Residues W22, 83–84, and 144–148 contribute to the substrate site; these read SL and FLALQ. Catalysis depends on S83, which acts as the Nucleophile. Residues D208 and H236 contribute to the active site. H236 provides a ligand contact to substrate.

This sequence belongs to the AB hydrolase superfamily. Carboxylesterase BioH family. In terms of assembly, monomer.

The protein resides in the cytoplasm. The catalysed reaction is 6-carboxyhexanoyl-[ACP] methyl ester + H2O = 6-carboxyhexanoyl-[ACP] + methanol + H(+). Its pathway is cofactor biosynthesis; biotin biosynthesis. The physiological role of BioH is to remove the methyl group introduced by BioC when the pimeloyl moiety is complete. It allows to synthesize pimeloyl-ACP via the fatty acid synthetic pathway through the hydrolysis of the ester bonds of pimeloyl-ACP esters. This is Pimeloyl-[acyl-carrier protein] methyl ester esterase from Proteus mirabilis (strain HI4320).